A 577-amino-acid polypeptide reads, in one-letter code: Aspartate--tRNA ligase (577 aa).

E171 is an L-aspartate binding site. The aspartate stretch occupies residues 195–198; the sequence is QLFK. R217 is a binding site for L-aspartate. ATP-binding positions include 217 to 219 and Q226; that span reads RDE. Residue H437 coordinates L-aspartate. E472 is a binding site for ATP. R479 is a binding site for L-aspartate. 524 to 527 contributes to the ATP binding site; it reads GFDR.

It belongs to the class-II aminoacyl-tRNA synthetase family. Type 1 subfamily. In terms of assembly, homodimer.

Its subcellular location is the cytoplasm. The enzyme catalyses tRNA(Asp) + L-aspartate + ATP = L-aspartyl-tRNA(Asp) + AMP + diphosphate. Catalyzes the attachment of L-aspartate to tRNA(Asp) in a two-step reaction: L-aspartate is first activated by ATP to form Asp-AMP and then transferred to the acceptor end of tRNA(Asp). The chain is Aspartate--tRNA ligase from Deinococcus geothermalis (strain DSM 11300 / CIP 105573 / AG-3a).